The sequence spans 394 residues: Elongation factor Tu (394 aa).

The region spanning 10–204 (KPHVNVGTIG…AVDEWIPTPE (195 aa)) is the tr-type G domain. The interval 19-26 (GHIDHGKT) is G1. Residue 19 to 26 (GHIDHGKT) coordinates GTP. Threonine 26 serves as a coordination point for Mg(2+). The interval 60–64 (GITIN) is G2. Positions 81–84 (DCPG) are G3. GTP-binding positions include 81 to 85 (DCPGH) and 136 to 139 (NKCD). The G4 stretch occupies residues 136–139 (NKCD). Residues 174–176 (SAL) form a G5 region.

It belongs to the TRAFAC class translation factor GTPase superfamily. Classic translation factor GTPase family. EF-Tu/EF-1A subfamily. As to quaternary structure, monomer.

Its subcellular location is the cytoplasm. The enzyme catalyses GTP + H2O = GDP + phosphate + H(+). In terms of biological role, GTP hydrolase that promotes the GTP-dependent binding of aminoacyl-tRNA to the A-site of ribosomes during protein biosynthesis. This Mycoplasma pneumoniae (strain ATCC 29342 / M129 / Subtype 1) (Mycoplasmoides pneumoniae) protein is Elongation factor Tu.